Reading from the N-terminus, the 333-residue chain is L-lactate dehydrogenase B chain (333 aa).

NAD(+) is bound by residues 29 to 57 and R99; that span reads GQVGMACAVSILMRELADELALVDVIEDK. 3 residues coordinate substrate: R106, N138, and R169. N138 is a binding site for NAD(+). H193 (proton acceptor) is an active-site residue. Residue T248 coordinates substrate.

It belongs to the LDH/MDH superfamily. LDH family. In terms of assembly, homotetramer.

It localises to the cytoplasm. The enzyme catalyses (S)-lactate + NAD(+) = pyruvate + NADH + H(+). It functions in the pathway fermentation; pyruvate fermentation to lactate; (S)-lactate from pyruvate: step 1/1. In terms of biological role, interconverts simultaneously and stereospecifically pyruvate and lactate with concomitant interconversion of NADH and NAD(+). The sequence is that of L-lactate dehydrogenase B chain (ldhb) from Anguilla rostrata (American eel).